Here is a 519-residue protein sequence, read N- to C-terminus: 3-octaprenyl-4-hydroxybenzoate carboxy-lyase (519 aa).

Mn(2+) is bound at residue N177. Residues 180–182 (IYR), 194–196 (RWL), and 199–200 (RG) each bind prenylated FMN. E243 provides a ligand contact to Mn(2+). D318 acts as the Proton donor in catalysis.

It belongs to the UbiD family. Homohexamer. Prenylated FMN is required as a cofactor. It depends on Mn(2+) as a cofactor.

Its subcellular location is the cell membrane. It catalyses the reaction a 4-hydroxy-3-(all-trans-polyprenyl)benzoate + H(+) = a 2-(all-trans-polyprenyl)phenol + CO2. It participates in cofactor biosynthesis; ubiquinone biosynthesis. In terms of biological role, catalyzes the decarboxylation of 3-octaprenyl-4-hydroxy benzoate to 2-octaprenylphenol, an intermediate step in ubiquinone biosynthesis. The sequence is that of 3-octaprenyl-4-hydroxybenzoate carboxy-lyase from Burkholderia thailandensis (strain ATCC 700388 / DSM 13276 / CCUG 48851 / CIP 106301 / E264).